A 100-amino-acid chain; its full sequence is Co-chaperonin GroES (100 aa).

This sequence belongs to the GroES chaperonin family. In terms of assembly, heptamer of 7 subunits arranged in a ring. Interacts with the chaperonin GroEL.

The protein resides in the cytoplasm. In terms of biological role, together with the chaperonin GroEL, plays an essential role in assisting protein folding. The GroEL-GroES system forms a nano-cage that allows encapsulation of the non-native substrate proteins and provides a physical environment optimized to promote and accelerate protein folding. GroES binds to the apical surface of the GroEL ring, thereby capping the opening of the GroEL channel. The protein is Co-chaperonin GroES of Mycolicibacterium vanbaalenii (strain DSM 7251 / JCM 13017 / BCRC 16820 / KCTC 9966 / NRRL B-24157 / PYR-1) (Mycobacterium vanbaalenii).